Consider the following 1072-residue polypeptide: Carbamoyl phosphate synthase large chain (1072 aa).

The tract at residues 1–401 is carboxyphosphate synthetic domain; it reads MPKYKDINKV…SLLKAVRSLE (401 aa). Residues arginine 129, arginine 169, glycine 175, glycine 176, lysine 208, leucine 210, glutamate 215, glycine 241, valine 242, histidine 243, glutamine 284, and glutamate 298 each contribute to the ATP site. The region spanning 133–327 is the ATP-grasp 1 domain; it reads KRKMQEIGEP…IAKVAAKIAI (195 aa). Glutamine 284, glutamate 298, and asparagine 300 together coordinate Mg(2+). Positions 284, 298, and 300 each coordinate Mn(2+). The tract at residues 402 to 544 is oligomerization domain; it reads IKAYGLRLNN…YIYSTYGEED (143 aa). Positions 545-929 are carbamoyl phosphate synthetic domain; sequence EVEIHEIPKV…ALYKALEGAG (385 aa). Residues 671 to 861 form the ATP-grasp 2 domain; the sequence is SKLLKELNIN…MVKLAVEVAL (191 aa). ATP contacts are provided by arginine 707, lysine 746, isoleucine 748, glutamate 752, glycine 777, valine 778, histidine 779, serine 780, glutamine 820, and glutamate 832. Mg(2+) contacts are provided by glutamine 820, glutamate 832, and asparagine 834. 3 residues coordinate Mn(2+): glutamine 820, glutamate 832, and asparagine 834. One can recognise an MGS-like domain in the interval 930–1072; sequence LKIPKKGKIL…QKDNVKNLVL (143 aa). Positions 930-1072 are allosteric domain; that stretch reads LKIPKKGKIL…QKDNVKNLVL (143 aa).

This sequence belongs to the CarB family. Composed of two chains; the small (or glutamine) chain promotes the hydrolysis of glutamine to ammonia, which is used by the large (or ammonia) chain to synthesize carbamoyl phosphate. Tetramer of heterodimers (alpha,beta)4. It depends on Mg(2+) as a cofactor. Mn(2+) serves as cofactor.

The catalysed reaction is hydrogencarbonate + L-glutamine + 2 ATP + H2O = carbamoyl phosphate + L-glutamate + 2 ADP + phosphate + 2 H(+). It catalyses the reaction hydrogencarbonate + NH4(+) + 2 ATP = carbamoyl phosphate + 2 ADP + phosphate + 2 H(+). The protein operates within amino-acid biosynthesis; L-arginine biosynthesis; carbamoyl phosphate from bicarbonate: step 1/1. Its pathway is pyrimidine metabolism; UMP biosynthesis via de novo pathway; (S)-dihydroorotate from bicarbonate: step 1/3. Its function is as follows. Large subunit of the glutamine-dependent carbamoyl phosphate synthetase (CPSase). CPSase catalyzes the formation of carbamoyl phosphate from the ammonia moiety of glutamine, carbonate, and phosphate donated by ATP, constituting the first step of 2 biosynthetic pathways, one leading to arginine and/or urea and the other to pyrimidine nucleotides. The large subunit (synthetase) binds the substrates ammonia (free or transferred from glutamine from the small subunit), hydrogencarbonate and ATP and carries out an ATP-coupled ligase reaction, activating hydrogencarbonate by forming carboxy phosphate which reacts with ammonia to form carbamoyl phosphate. In Thermoanaerobacter sp. (strain X514), this protein is Carbamoyl phosphate synthase large chain.